The sequence spans 84 residues: Large ribosomal subunit protein bL27 (84 aa).

The interval 1 to 21 is disordered; sequence MAHKKGGGSTKNGRDSNPKYL.

Belongs to the bacterial ribosomal protein bL27 family.

The protein is Large ribosomal subunit protein bL27 of Chlorobium luteolum (strain DSM 273 / BCRC 81028 / 2530) (Pelodictyon luteolum).